The sequence spans 230 residues: 2,3-bisphosphoglycerate-dependent phosphoglycerate mutase (230 aa).

Residues 8 to 15, 21 to 22, R60, 87 to 90, K98, 114 to 115, and 183 to 184 contribute to the substrate site; these read RHGESEWN, TG, ERHY, RR, and GN. Catalysis depends on H9, which acts as the Tele-phosphohistidine intermediate. The active-site Proton donor/acceptor is E87.

This sequence belongs to the phosphoglycerate mutase family. BPG-dependent PGAM subfamily.

The catalysed reaction is (2R)-2-phosphoglycerate = (2R)-3-phosphoglycerate. It participates in carbohydrate degradation; glycolysis; pyruvate from D-glyceraldehyde 3-phosphate: step 3/5. Its function is as follows. Catalyzes the interconversion of 2-phosphoglycerate and 3-phosphoglycerate. This is 2,3-bisphosphoglycerate-dependent phosphoglycerate mutase from Streptococcus pneumoniae (strain ATCC BAA-255 / R6).